Reading from the N-terminus, the 869-residue chain is MFRVLNKVFDTNQRDVQRIVKTVVQPVNALEEETMKIENLAEAFMRLRQRVQEGGESLDDVLVPAFALIREAGRRAIGKRHYDVQLIGGTALHQGRIAEMRTGEGKTLVATLALALNALEGKGAHLVTVNDYLARVGAEEMGLLYRTLGLSVGLITRDMQPHQRQAAYACDITYVTNSELGFDYLRDNMAQSREQLVLRADNPLHYAIVDEVDSILIDEARTPLIISGAAEKATDLYYVYAKLVKRLQRGEPAEPGKRTEPTGDYTIDEKGKQVHLTEQGIAKIERLLSLGDLYSPENMDKAHMITQAIRARELYHREKDYIVNAEGEVVIIDEFTGRSMPGRRYGEGLHQAIEAKEGVKIENENQTLATITYQNFFRLYDKFAGMTGTAKTEEKEFLDIYGSDVLVIPTNKPVIRQDADDLVYRTRMGKYQAVVEEVKQMHATGRPILIGTASIDTSEQLSALLKQAGIRHSVLNAKYEAQEASIIAQAGRSGTVTIATNMAGRGTDIMLGGNAEFILGEAIEQNFGISRFTPEAEAFIKAIGREDPEAVTLGLRIPGMTEQFIRQAQQLQKDIIADRERVRELGGLHIIGTERHESRRIDNQLRGRAGRQGDPGSSRFYVSFEDDLMRLFASDRVVAMMDRLGMDDTQPIEAKMVTGAIERAQARVEDRNFGIRKQLLEFDNVMSKQRDIIYAQRREVLLGTDEDVEESTEGMIADFTEMQLAFYAPIDQPAESWDLETLRTNMLEAVPQLEHYDFEALRHMAPEAAHAHLLEAVADAFDARKAELGPTMLNSLARYVLLQVVDQHWKEHLHGMDVLRQGIGLRGYGQRDPFTEYKFEATNMFNDMIDNLKADVTKFIFRMQFGQAS.

Residues Gln-85, 103 to 107 (GEGKT), and Asp-508 each bind ATP.

The protein belongs to the SecA family. As to quaternary structure, monomer and homodimer. Part of the essential Sec protein translocation apparatus which comprises SecA, SecYEG and auxiliary proteins SecDF. Other proteins may also be involved.

The protein resides in the cell membrane. The protein localises to the cytoplasm. It carries out the reaction ATP + H2O + cellular proteinSide 1 = ADP + phosphate + cellular proteinSide 2.. In terms of biological role, part of the Sec protein translocase complex. Interacts with the SecYEG preprotein conducting channel. Has a central role in coupling the hydrolysis of ATP to the transfer of proteins into and across the cell membrane, serving as an ATP-driven molecular motor driving the stepwise translocation of polypeptide chains across the membrane. The polypeptide is Protein translocase subunit SecA (Deinococcus geothermalis (strain DSM 11300 / CIP 105573 / AG-3a)).